A 91-amino-acid polypeptide reads, in one-letter code: Ragulator complex protein LAMTOR5 homolog (91 aa).

Belongs to the LAMTOR5 family. Part of the Ragulator complex.

The protein resides in the cytoplasm. It localises to the lysosome. Its function is as follows. Regulator of the TOR pathway, a signaling cascade that promotes cell growth in response to growth factors, energy levels, and amino acids. As part of the Ragulator complex, may activate the TOR signaling cascade in response to amino acids. This is Ragulator complex protein LAMTOR5 homolog from Ixodes scapularis (Black-legged tick).